The chain runs to 560 residues: Formate--tetrahydrofolate ligase (560 aa).

69-76 provides a ligand contact to ATP; sequence TPAGEGKS.

The protein belongs to the formate--tetrahydrofolate ligase family.

It carries out the reaction (6S)-5,6,7,8-tetrahydrofolate + formate + ATP = (6R)-10-formyltetrahydrofolate + ADP + phosphate. The protein operates within one-carbon metabolism; tetrahydrofolate interconversion. This chain is Formate--tetrahydrofolate ligase, found in Listeria monocytogenes serotype 4b (strain CLIP80459).